Reading from the N-terminus, the 792-residue chain is RAD50-interacting protein 1 (792 aa).

The disordered stretch occupies residues 1–22 (MLPAGEIGASPAAPCCSESGDE). A coiled-coil region spans residues 103–124 (IRSALKNAEESKQFLNQFLEQE). The 573-residue stretch at 220–792 (WHKILKDKLT…LRTNWPNTGK (573 aa)) folds into the RINT1/TIP20 domain.

It belongs to the RINT1 family. Component of the NRZ complex composed of NBAS, ZW10 and RINT1/TIP20L; NRZ associates with SNAREs STX18, USE1L, BNIP1/SEC20L and SEC22B (the assembly has been described as syntaxin 18 complex). Interacts directly with BNIP1/SEC20L and ZW10. Interacts with UVRAG. Interacts with RAD50 during late S and G2/M phases. Interacts with RBL2, preferentially with the active, hypophosphorylated form.

The protein localises to the cytoplasm. It localises to the endoplasmic reticulum membrane. Its function is as follows. Involved in regulation of membrane traffic between the Golgi and the endoplasmic reticulum (ER); the function is proposed to depend on its association in the NRZ complex which is believed to play a role in SNARE assembly at the ER. May play a role in cell cycle checkpoint control. Essential for telomere length control. The protein is RAD50-interacting protein 1 (RINT1) of Homo sapiens (Human).